Consider the following 119-residue polypeptide: MKALSPVRGCYEAVCCLSERSLAIARGRGKSPSTEEPLSLLDDMNHCYSRLRELVPGVPRGTQLSQVEILQRVIDYILDLQVVLAEPAPGPPDGPHLPIQTAELTPELVISKDKRSFCH.

Positions 28–80 (RGKSPSTEEPLSLLDDMNHCYSRLRELVPGVPRGTQLSQVEILQRVIDYILDL) constitute a bHLH domain. The tract at residues 35–87 (EEPLSLLDDMNHCYSRLRELVPGVPRGTQLSQVEILQRVIDYILDLQVVLAEP) is interaction with IFI204.

Homodimer, and heterodimer with other HLH proteins. Interacts with CLOCK and BMAL1. Interacts with COPS5 and COPS7A. Interacts with IFI204. Interacts with GATA4 and NKX2-5. Interacts with ANKRD2; both proteins cooperate in myoblast differentiation. In terms of processing, polyubiquitinated; which is favored by Ifi204 and leads to proteasomal degradation. As to expression, expressed by myoblasts (at protein level).

Its subcellular location is the nucleus. The protein resides in the cytoplasm. Functionally, transcriptional regulator (lacking a basic DNA binding domain) which negatively regulates the basic helix-loop-helix (bHLH) transcription factors by forming heterodimers and inhibiting their DNA binding and transcriptional activity. Implicated in regulating a variety of cellular processes, including cellular growth, senescence, differentiation, apoptosis, angiogenesis, and neoplastic transformation. Involved in myogenesis by inhibiting skeletal muscle and cardiac myocyte differentiation and promoting muscle precursor cells proliferation. Inhibits the binding of E2A-containing protein complexes to muscle creatine kinase E-box enhancer. Regulates the circadian clock by repressing the transcriptional activator activity of the CLOCK-BMAL1 heterodimer. The sequence is that of DNA-binding protein inhibitor ID-3 (Id3) from Mus musculus (Mouse).